The primary structure comprises 435 residues: Protein phosphatase 2C homolog 2 (435 aa).

The PPM-type phosphatase domain maps to 23–298; sequence IYGVSAMQGW…DNMTMIIIGL (276 aa). The Mn(2+) site is built by Asp-71, Gly-72, Asp-240, and Asp-289. Residues 366–435 form a disordered region; it reads DQTEEDRDLP…TSGAPEKSTS (70 aa). Positions 381-392 are enriched in basic and acidic residues; the sequence is ELPDSARNEREG. A compositionally biased stretch (low complexity) spans 409 to 418; the sequence is GSSASTSEST. Residues 419–435 are compositionally biased toward polar residues; the sequence is VTPAGSSTSGAPEKSTS.

The protein belongs to the PP2C family. Mg(2+) is required as a cofactor. It depends on Mn(2+) as a cofactor.

It localises to the cytoplasm. The protein resides in the nucleus. It catalyses the reaction O-phospho-L-seryl-[protein] + H2O = L-seryl-[protein] + phosphate. It carries out the reaction O-phospho-L-threonyl-[protein] + H2O = L-threonyl-[protein] + phosphate. Dephosphorylating regulator for many key proteins. Dephosphorylates phosphoglycerate kinase pgk1 at least on 'Ser-203' to negatively regulate targeting of pgk1 to the mitochondrion, thereby negatively regulating production of acetyl-CoA and consequently aflatoxin biosynthesis. This chain is Protein phosphatase 2C homolog 2, found in Aspergillus flavus (strain ATCC 200026 / FGSC A1120 / IAM 13836 / NRRL 3357 / JCM 12722 / SRRC 167).